The primary structure comprises 123 residues: Prostate stem cell antigen (123 aa).

The signal sequence occupies residues methionine 1–alanine 20. The 75-residue stretch at leucine 21 to asparagine 95 folds into the UPAR/Ly6 domain. Cystine bridges form between cysteine 23-cysteine 48, cysteine 26-cysteine 35, cysteine 41-cysteine 66, cysteine 70-cysteine 86, and cysteine 87-cysteine 92. Asparagine 40 carries N-linked (GlcNAc...) asparagine glycosylation. A lipid anchor (GPI-anchor amidated asparagine) is attached at asparagine 95. The propeptide at glycine 96 to leucine 123 is removed in mature form.

In terms of assembly, interacts with CHRNA4. As to expression, predominantly expressed in prostate. Also found in spleen, liver, lung, prostate, kidney and testis. Expressed in brain cortex; expression is increased in transgenic mouse model of Alzheimer disease (at protein level).

Its subcellular location is the cell membrane. Its function is as follows. May be involved in the regulation of cell proliferation. May act as a modulator of nicotinic acetylcholine receptors (nAChRs) activity. In vitro inhibits nicotine-induced signaling probably implicating alpha-3:beta-2- or alpha-7-containing nAChRs. In Mus musculus (Mouse), this protein is Prostate stem cell antigen (Psca).